The sequence spans 483 residues: Glutamyl-tRNA(Gln) amidotransferase subunit A (483 aa).

Active-site charge relay system residues include Lys77 and Ser152. Ser176 (acyl-ester intermediate) is an active-site residue.

It belongs to the amidase family. GatA subfamily. As to quaternary structure, heterotrimer of A, B and C subunits.

The catalysed reaction is L-glutamyl-tRNA(Gln) + L-glutamine + ATP + H2O = L-glutaminyl-tRNA(Gln) + L-glutamate + ADP + phosphate + H(+). Its function is as follows. Allows the formation of correctly charged Gln-tRNA(Gln) through the transamidation of misacylated Glu-tRNA(Gln) in organisms which lack glutaminyl-tRNA synthetase. The reaction takes place in the presence of glutamine and ATP through an activated gamma-phospho-Glu-tRNA(Gln). The sequence is that of Glutamyl-tRNA(Gln) amidotransferase subunit A from Listeria monocytogenes serotype 4a (strain HCC23).